Consider the following 373-residue polypeptide: S-adenosylmethionine:tRNA ribosyltransferase-isomerase (373 aa).

Belongs to the QueA family. Monomer.

It localises to the cytoplasm. The enzyme catalyses 7-aminomethyl-7-carbaguanosine(34) in tRNA + S-adenosyl-L-methionine = epoxyqueuosine(34) in tRNA + adenine + L-methionine + 2 H(+). It participates in tRNA modification; tRNA-queuosine biosynthesis. Transfers and isomerizes the ribose moiety from AdoMet to the 7-aminomethyl group of 7-deazaguanine (preQ1-tRNA) to give epoxyqueuosine (oQ-tRNA). In Prochlorococcus marinus (strain MIT 9515), this protein is S-adenosylmethionine:tRNA ribosyltransferase-isomerase.